Reading from the N-terminus, the 188-residue chain is Pyridoxal 5'-phosphate synthase subunit PdxT (188 aa).

47–49 (GES) is an L-glutamine binding site. The Nucleophile role is filled by Cys-79. L-glutamine-binding positions include Arg-106 and 134 to 135 (IR). Active-site charge relay system residues include His-169 and Glu-171.

Belongs to the glutaminase PdxT/SNO family. In terms of assembly, in the presence of PdxS, forms a dodecamer of heterodimers. Only shows activity in the heterodimer.

It catalyses the reaction aldehydo-D-ribose 5-phosphate + D-glyceraldehyde 3-phosphate + L-glutamine = pyridoxal 5'-phosphate + L-glutamate + phosphate + 3 H2O + H(+). The enzyme catalyses L-glutamine + H2O = L-glutamate + NH4(+). It participates in cofactor biosynthesis; pyridoxal 5'-phosphate biosynthesis. Functionally, catalyzes the hydrolysis of glutamine to glutamate and ammonia as part of the biosynthesis of pyridoxal 5'-phosphate. The resulting ammonia molecule is channeled to the active site of PdxS. The polypeptide is Pyridoxal 5'-phosphate synthase subunit PdxT (Caldicellulosiruptor bescii (strain ATCC BAA-1888 / DSM 6725 / KCTC 15123 / Z-1320) (Anaerocellum thermophilum)).